Here is an 840-residue protein sequence, read N- to C-terminus: Protein HIR1 (840 aa).

WD repeat units follow at residues 15-54 (SRDY…SAAA), 72-111 (RHTG…HGGS), 129-168 (AHDN…RLKR), 171-210 (VHQS…EVSF), 224-267 (PLTT…SSIS), 292-336 (KAKN…PIFV), and 340-381 (IAQK…MPIP).

Belongs to the WD repeat HIR1 family.

The protein localises to the nucleus. Its function is as follows. Required for replication-independent chromatin assembly and for the periodic repression of histone gene transcription during the cell cycle. This chain is Protein HIR1 (HIR1), found in Candida glabrata (strain ATCC 2001 / BCRC 20586 / JCM 3761 / NBRC 0622 / NRRL Y-65 / CBS 138) (Yeast).